A 469-amino-acid chain; its full sequence is MALTIYQHSSSLTSHLQTVHQTQVQFRKFVGITKVWDAQVRDKKLLALAHTEIIVRLSDPSAIPKLESVRIASGHINHPSVTFVTDPEKCPLCTNPSVSSSKSLSDLPTSGVVLKLRDLNLKSPLQMNDVILETGVTGLDIEAHILGRHYPHLAIILLGGVEHLVNIQTTTLTQHYQDLTLNLFGTTYKAGYLNSLRTISSEQEQPVYNGPGIRTLVPNGHVIIPNTPPPAQINQAASQGVITYQQSRDDNEDPFTTHHFRPDDGSDFPQSEHTNVPALVLSPSPSAMPPVESSNTRDQQTNAASAFTPIEPESRVADWSEDFDSAQMDQNLTPPQPPAPASTPEDTDSTARQPQVTPTRVPNTVTATSASTPASTSQIQFGDRSPVTMTQHTLRAPPPPPQPTNRNITPDFLRPRPTDVPSSNFNHLAILRNPTDQALTDRLNALAGLVNAGVLDPQECREILQTLKN.

Disordered stretches follow at residues 248-314 (RDDN…EPES) and 327-418 (QMDQ…PRPT). 2 stretches are compositionally biased toward polar residues: residues 292–305 (ESSN…NAAS) and 350–365 (TARQ…PNTV). Low complexity predominate over residues 366–377 (TATSASTPASTS).

This is an uncharacterized protein from Cryphonectria parasitica (Chestnut blight fungus).